The primary structure comprises 296 residues: Enoyl-CoA hydratase AKT3-2 (296 aa).

The Peroxisomal targeting signal type 1 signature appears at 294–296 (PKL).

The protein belongs to the enoyl-CoA hydratase/isomerase family.

Its subcellular location is the peroxisome. It carries out the reaction a (3S)-3-hydroxyacyl-CoA = a (2E)-enoyl-CoA + H2O. The catalysed reaction is a 4-saturated-(3S)-3-hydroxyacyl-CoA = a (3E)-enoyl-CoA + H2O. It functions in the pathway mycotoxin biosynthesis. Enoyl-CoA hydratase; part of the gene clusters that mediate the biosynthesis of the host-selective toxins (HSTs) AK-toxins responsible for Japanese pear black spot disease by the Japanese pear pathotype. AK-toxins are esters of 9,10-epoxy 8-hydroxy 9-methyldecatrienoic acid (EDA). On cellular level, AK-toxins affect plasma membrane of susceptible cells and cause a sudden increase in loss of K(+) after a few minutes of toxin treatment. The acyl-CoA ligase AKT1, the hydrolase AKT2 and enoyl-CoA hydratase AKT3 are all involved in the biosynthesis of the AK-, AF- and ACT-toxin common 9,10-epoxy-8-hydroxy-9-methyl-decatrienoic acid (EDA) structural moiety. Part of the EDA biosynthesis occurs in the peroxisome since these 3 enzymes are localized in peroxisomes. The exact roles of the 3 enzymes, as well as of additional AK-toxin clusters enzymes, including AKT4, AKT6 and AKTS1, have still to be elucidated. The Cytochrome P450 monooxygenase AKT7 on the other side functions to limit production of EDA and AK-toxin, probably via the catalysis of a side reaction of EDA or its precursor. The chain is Enoyl-CoA hydratase AKT3-2 from Alternaria alternata (Alternaria rot fungus).